A 98-amino-acid chain; its full sequence is NADH-ubiquinone oxidoreductase chain 4L (98 aa).

The next 3 membrane-spanning stretches (helical) occupy residues 1-21 (MLAI…GVLV), 25-45 (HLMS…ILMT), and 57-79 (SMAP…ALLV).

The protein belongs to the complex I subunit 4L family. Core subunit of respiratory chain NADH dehydrogenase (Complex I) which is composed of 45 different subunits.

Its subcellular location is the mitochondrion inner membrane. It catalyses the reaction a ubiquinone + NADH + 5 H(+)(in) = a ubiquinol + NAD(+) + 4 H(+)(out). Its function is as follows. Core subunit of the mitochondrial membrane respiratory chain NADH dehydrogenase (Complex I) which catalyzes electron transfer from NADH through the respiratory chain, using ubiquinone as an electron acceptor. Part of the enzyme membrane arm which is embedded in the lipid bilayer and involved in proton translocation. This Dasyurus hallucatus (Northern quoll) protein is NADH-ubiquinone oxidoreductase chain 4L (MT-ND4L).